Consider the following 440-residue polypeptide: Chromosome partition protein MukF (440 aa).

Residues 208 to 236 form a leucine-zipper region; sequence LSETSGTLRELQDTLEAAGDKLQANLLRI.

This sequence belongs to the MukF family. In terms of assembly, interacts, and probably forms a ternary complex, with MukE and MukB via its C-terminal region. The complex formation is stimulated by calcium or magnesium. It is required for an interaction between MukE and MukB.

Its subcellular location is the cytoplasm. The protein resides in the nucleoid. Functionally, involved in chromosome condensation, segregation and cell cycle progression. May participate in facilitating chromosome segregation by condensation DNA from both sides of a centrally located replisome during cell division. Not required for mini-F plasmid partitioning. Probably acts via its interaction with MukB and MukE. Overexpression results in anucleate cells. It has a calcium binding activity. The sequence is that of Chromosome partition protein MukF from Escherichia coli O127:H6 (strain E2348/69 / EPEC).